The chain runs to 389 residues: Succinate--CoA ligase [ADP-forming] subunit beta (389 aa).

The 236-residue stretch at 9-244 folds into the ATP-grasp domain; it reads KELLRQFNVP…IDEEDAAEIE (236 aa). ATP is bound by residues K46, 53–55, E99, A102, and E107; that span reads GRG. Residues N199 and D213 each contribute to the Mg(2+) site. Substrate contacts are provided by residues N264 and 321–323; that span reads GIM.

Belongs to the succinate/malate CoA ligase beta subunit family. As to quaternary structure, heterotetramer of two alpha and two beta subunits. Mg(2+) serves as cofactor.

It catalyses the reaction succinate + ATP + CoA = succinyl-CoA + ADP + phosphate. It carries out the reaction GTP + succinate + CoA = succinyl-CoA + GDP + phosphate. The protein operates within carbohydrate metabolism; tricarboxylic acid cycle; succinate from succinyl-CoA (ligase route): step 1/1. Functionally, succinyl-CoA synthetase functions in the citric acid cycle (TCA), coupling the hydrolysis of succinyl-CoA to the synthesis of either ATP or GTP and thus represents the only step of substrate-level phosphorylation in the TCA. The beta subunit provides nucleotide specificity of the enzyme and binds the substrate succinate, while the binding sites for coenzyme A and phosphate are found in the alpha subunit. This Polynucleobacter necessarius subsp. necessarius (strain STIR1) protein is Succinate--CoA ligase [ADP-forming] subunit beta.